Reading from the N-terminus, the 286-residue chain is CLA biosynthesis dehydrogenase/reductase (286 aa).

Residues Asp37, Asp63, Val64, Asn90, Tyr156, and Lys160 each contribute to the NAD(+) site. Catalysis depends on Tyr156, which acts as the Proton acceptor.

This sequence belongs to the short-chain dehydrogenases/reductases (SDR) family.

It is found in the cytoplasm. It catalyses the reaction (10S)-hydroxy-(12Z)-octadecenoate + NAD(+) = 10-oxo-(12Z)-octadecenoate + NADH + H(+). It carries out the reaction 10-oxo-(11E)-octadecenoate + NADH + H(+) = 10-hydroxy-(11E)-octadecenoate + NAD(+). The enzyme catalyses 10-oxooctadecanoate + NADH + H(+) = 10-hydroxyoctadecanoate + NAD(+). It participates in lipid metabolism; fatty acid metabolism. Functionally, is involved in a saturation metabolic pathway of polyunsaturated fatty acids, that detoxifies unsaturated fatty acids and generates hydroxy fatty acids, oxo fatty acids, conjugated fatty acids such as conjugated linoleic acids (CLAs), and partially saturated trans-fatty acids as intermediates. CLA-DH catalyzes the dehydrogenation/reduction steps in the production of 10-oxo-(12Z)-octadecenoate, 10-hydroxy-(11E)-octadecenoate and 10-hydroxyoctadecanoate during linoleate metabolism. As part of the gut microbiome, this enzyme modifies host fatty acid composition and is expected to improve human health by altering lipid metabolism related to the onset of metabolic syndrome. The protein is CLA biosynthesis dehydrogenase/reductase of Lactiplantibacillus plantarum (Lactobacillus plantarum).